Here is a 394-residue protein sequence, read N- to C-terminus: Monoterpene synthase FDS-5, chloroplastic (394 aa).

Residues 1 to 65 constitute a chloroplast transit peptide; sequence MASFISLSSK…NLNSQFMQVY (65 aa). Residues lysine 100, arginine 103, and glutamine 138 each coordinate isopentenyl diphosphate. The Mg(2+) site is built by aspartate 145 and aspartate 149. The DDXXD motif signature appears at 145–149; the sequence is DDMMD. Arginine 154 serves as a coordination point for dimethylallyl diphosphate. Arginine 155 is an isopentenyl diphosphate binding site. Positions 242, 281, 298, and 307 each coordinate dimethylallyl diphosphate.

Belongs to the FPP/GGPP synthase family. The cofactor is Mg(2+). Mn(2+) serves as cofactor.

It is found in the plastid. The protein localises to the chloroplast. The enzyme catalyses isopentenyl diphosphate + dimethylallyl diphosphate = (2E)-geranyl diphosphate + diphosphate. It carries out the reaction 2 dimethylallyl diphosphate = (R,R)-chrysanthemyl diphosphate + diphosphate. It catalyses the reaction 2 dimethylallyl diphosphate = (R)-lavandulyl diphosphate + diphosphate. Functionally, condenses two molecules of dimethylallyl diphosphate (DMAPP) to produce mainly an irregular monoterpene, chrysanthemyl diphosphate (CPP) and lower amounts of a branched monoterpene, lavandulyl diphosphate (LPP). CPP is a precursor of the pyrethrin insecticides. When incubated with isopentenyl diphosphate (IPP) and DMAPP, catalyzes three competing isoprenoid condensation reactions, a chain elongation to give geranyl diphosphate (GPP), a cyclopropanation to give CPP and a branching to give LPP. The sequence is that of Monoterpene synthase FDS-5, chloroplastic (FDS-5) from Artemisia spiciformis (Spiked big sagebrush).